Reading from the N-terminus, the 1891-residue chain is Endoribonuclease Dicer-L (1891 aa).

A Helicase ATP-binding domain is found at 41–217 (LLEAALDHNT…DLEEKIQKLE (177 aa)). 54–61 (LNSGSGKT) contacts ATP. The DECH box signature appears at 165–168 (DECH). Residues 425 to 594 (SFPSPFTNIL…SIDCGNTESE (170 aa)) form the Helicase C-terminal domain. The Dicer dsRNA-binding fold domain occupies 622 to 714 (AIGHINRYCA…MPVGKETVKY (93 aa)). The 148-residue stretch at 887–1034 (KFVEDIEKSE…LVPELCAIHP (148 aa)) folds into the PAZ domain. RNase III domains are found at residues 1248–1379 (TSDM…ETSG) and 1635–1793 (FENF…MDSG). Positions 1292, 1370, 1373, 1674, 1779, and 1782 each coordinate Mg(2+). In terms of domain architecture, DRBM spans 1818–1883 (VPRSPVRELL…ARRALRSLKA (66 aa)).

It belongs to the helicase family. Dicer subfamily. As to quaternary structure, component of the RISC loading complex (RLC), or micro-RNA (miRNA) loading complex (miRLC), which is composed of dicer1, ago2 and tarbp2; dicer1 and tarbp2 are required to process precursor miRNAs (pre-miRNAs) to mature miRNAs and then load them onto ago2. Note that the trimeric RLC/miRLC is also referred to as RISC. Mg(2+) is required as a cofactor. It depends on Mn(2+) as a cofactor.

It localises to the cytoplasm. It catalyses the reaction Endonucleolytic cleavage to 5'-phosphomonoester.. Double-stranded RNA (dsRNA) endoribonuclease playing a central role in short dsRNA-mediated post-transcriptional gene silencing. Cleaves naturally occurring long dsRNAs and short hairpin pre-microRNAs (miRNA) into fragments of 21 to 23 nucleotides with 3' overhang of two nucleotides, producing respectively short interfering RNAs (siRNA) and mature microRNAs. SiRNAs and miRNAs serve as guide to direct the RNA-induced silencing complex (RISC) to complementary RNAs to degrade them or prevent their translation. Gene silencing mediated by siRNAs, also called RNA interference, controls the elimination of transcripts from mobile and repetitive DNA elements of the genome but also the degradation of exogenous RNA of viral origin for instance. The miRNA pathway on the other side is a mean to specifically regulate the expression of target genes. During embryonic development, at the left-right organizer, post-transcriptionally regulates the expression of dand5 in flow sensor cells. In post-flow stages, acts along with Bicc1 to repress dand5 mRNA translation and decay. Decreased Dand5 expression lifts repression of Nodal and defines leftness by induction of the lateral plate mesoderm Nodal signaling cascade. This is Endoribonuclease Dicer-L (dicer1.L) from Xenopus laevis (African clawed frog).